We begin with the raw amino-acid sequence, 254 residues long: Ciliary microtubule associated protein 1A (254 aa).

STPGR repeat units follow at residues 180 to 205 and 216 to 241; these read PGPA…MAAR and PGPG…FGIK. Residues 207-226 form a disordered region; it reads EPPGDKTLKPGPGAHSPEKV.

It belongs to the CIMAP family. As to quaternary structure, microtubule inner protein component of sperm flagellar doublet microtubules. Testis-specific.

It localises to the cytoplasm. The protein localises to the cytoskeleton. It is found in the flagellum axoneme. In terms of biological role, outer dense fibers are filamentous structures located on the outside of the axoneme in the midpiece and principal piece of the mammalian sperm tail. May help to maintain the passive elastic structures and elastic recoil of the sperm tail. The polypeptide is Ciliary microtubule associated protein 1A (Homo sapiens (Human)).